The chain runs to 435 residues: ATP-dependent RNA helicase RhlB (435 aa).

The short motif at Gln-9–Ala-37 is the Q motif element. The Helicase ATP-binding domain occupies Leu-40–Val-219. ATP is bound at residue Ala-53–Thr-60. The DEAD box motif lies at Asp-165–Asp-168. Residues Ala-245 to Ile-390 enclose the Helicase C-terminal domain. Residues Ala-395 to Ala-435 are disordered. Positions Ser-401–Gly-413 are enriched in polar residues. The segment covering Asn-422–Ala-435 has biased composition (basic residues).

This sequence belongs to the DEAD box helicase family. RhlB subfamily. In terms of assembly, component of the RNA degradosome, which is a multiprotein complex involved in RNA processing and mRNA degradation.

The protein resides in the cytoplasm. The enzyme catalyses ATP + H2O = ADP + phosphate + H(+). Functionally, DEAD-box RNA helicase involved in RNA degradation. Has RNA-dependent ATPase activity and unwinds double-stranded RNA. The chain is ATP-dependent RNA helicase RhlB from Vibrio vulnificus (strain YJ016).